The chain runs to 523 residues: UDP-glucuronosyltransferase 3A1 (523 aa).

Residues M1–A22 form the signal peptide. Topologically, residues A23–Q483 are extracellular. A glycan (N-linked (GlcNAc...) asparagine) is linked at N52. The chain crosses the membrane as a helical span at residues Y484–G504. The Cytoplasmic segment spans residues K505–A523.

This sequence belongs to the UDP-glycosyltransferase family.

Its subcellular location is the membrane. The catalysed reaction is glucuronate acceptor + UDP-alpha-D-glucuronate = acceptor beta-D-glucuronoside + UDP + H(+). Its function is as follows. UDP-glucuronosyltransferases catalyze phase II biotransformation reactions in which lipophilic substrates are conjugated with glucuronic acid to increase water solubility and enhance excretion. They are of major importance in the conjugation and subsequent elimination of potentially toxic xenobiotics and endogenous compounds. The sequence is that of UDP-glucuronosyltransferase 3A1 (UGT3A1) from Bos taurus (Bovine).